The chain runs to 500 residues: UPF0371 protein SZO_06760 (500 aa).

Belongs to the UPF0371 family.

The sequence is that of UPF0371 protein SZO_06760 from Streptococcus equi subsp. zooepidemicus (strain H70).